Here is a 165-residue protein sequence, read N- to C-terminus: Type IV major pilin protein PilE1 (165 aa).

Residues 1-7 (MNTLQKG) constitute a propeptide, leader sequence. Phe8 is modified (N-methylphenylalanine). Residues 8 to 28 (FTLIELMIVIAIVGILAAVAL) traverse the membrane as a helical segment. Residue Ser70 is glycosylated (O-linked (DADDGlc) serine). O-(2-aminoethylphosphoryl)serine; alternate is present on Ser75. Position 75 is an O-(2-cholinephosphoryl)serine; alternate (Ser75). Ser75 is modified (phosphoserine; alternate). Ser101 bears the O-(sn-1-glycerophosphoryl)serine; partial mark. Cysteines 128 and 158 form a disulfide. Residues 137 to 153 (DDTVADAKDGKEIDTKH) show a composition bias toward basic and acidic residues. Residues 137-165 (DDTVADAKDGKEIDTKHLPSTCRDNFDAK) form a disordered region.

It belongs to the N-Me-Phe pilin family. The pili are polar flexible filaments of about 5.4 nanometers diameter and 2.5 micrometers average length; they consist of only a single polypeptide chain arranged in a helical configuration of five subunits per turn in the assembled pilus. Post-translationally, the O-linked glycan identified as Gal-GlcNAc disaccharide in PubMed:7477282 and PubMed:10048019 is now identified as either a hexosyl-diacetamidotrideoxyhexoside (DATDHex) by mass spectrometry in PubMed:15249686, or alpha-D-galactopyranosyl-(1-&gt;3)-2,4-diacetamido-2,4-dideoxy-beta-D-glucopyranoside (DADDGlc) by X-ray diffraction in PubMed:16949362. It is not clear whether there is a chemical difference in the glycosylation of the two derivatives of strain MS11 used in these experiments, or not. In terms of processing, in some MS11 derivative strains, Ser-75 is modified to O-(2-aminoethylphosphoryl)serine, and in some other derivatives that can be secondarily modified to O-(2-cholinephosphoryl)serine by N-methylation.

Its subcellular location is the fimbrium. The protein resides in the membrane. Functionally, major component of the type IV pilus (T4P) that plays a role in cellular adherence, microcolony formation, resistance to neutrophil mediated killing, twitching motility as well as transformation. Mediates the attachment and the formation of bacterial microcolonies on host epithelial cells. Mechanistically, pili retractation induces host NF-kappa-B activation in infected cells, which is temporally associated with the formation of gonococcal microcolonies. The chain is Type IV major pilin protein PilE1 (pilE1) from Neisseria gonorrhoeae.